The chain runs to 501 residues: MAINAQEISALIKKQIEDFQPNFDVTETGIVTYIGDGIARARGLDNAMSGELLEFSNGAYGMAQNLESNDVGIIILGDFSEIREGDVVKRTGKIMEVPVGEAMIGRVVNPLGQPVDGLGEIETTATRPVETPAPGVMQRKSVFEPLQTGLKAIDALVPIGRGQRELIIGDRQTGKTSVAIDAILNQKGQDMICIYVAIGQKESTVRTQVETLRKYGALDYTIVVTASASQPSPLLFIAPYAGVAMAEEFMYNGKHVLIVYDDLSKQAVAYRELSLLLRRPPGREAYPGDVFYLHSRLLERSAKVSDALGGGSITALPFIETQAGDISAYIATNVISITDGQIFLQENLFNSGIRPAIDAGSSVSRVGGAAQIKAMKRVAGTLRLDLASYRELEAFTQFGSDLDAATQAKLNRGRRTVEVLKQPLHKPLPVEKQVVILYALTHGFLDDVPVNDILAFEEALYDYFDAHYDNLFETIRTTKDLPEEAELDAAIQAFKDQSQFK.

Residue 169 to 176 (GDRQTGKT) coordinates ATP.

Belongs to the ATPase alpha/beta chains family. F-type ATPases have 2 components, CF(1) - the catalytic core - and CF(0) - the membrane proton channel. CF(1) has five subunits: alpha(3), beta(3), gamma(1), delta(1), epsilon(1). CF(0) has three main subunits: a(1), b(2) and c(9-12). The alpha and beta chains form an alternating ring which encloses part of the gamma chain. CF(1) is attached to CF(0) by a central stalk formed by the gamma and epsilon chains, while a peripheral stalk is formed by the delta and b chains.

It is found in the cell membrane. The catalysed reaction is ATP + H2O + 4 H(+)(in) = ADP + phosphate + 5 H(+)(out). Produces ATP from ADP in the presence of a proton gradient across the membrane. The alpha chain is a regulatory subunit. This chain is ATP synthase subunit alpha, found in Streptococcus agalactiae serotype Ia (strain ATCC 27591 / A909 / CDC SS700).